The chain runs to 426 residues: Serine hydroxymethyltransferase 1 (426 aa).

(6S)-5,6,7,8-tetrahydrofolate is bound by residues L118 and 122–124; that span reads GHL. Residue K227 is modified to N6-(pyridoxal phosphate)lysine.

Belongs to the SHMT family. In terms of assembly, homodimer. Requires pyridoxal 5'-phosphate as cofactor.

It localises to the cytoplasm. The catalysed reaction is (6R)-5,10-methylene-5,6,7,8-tetrahydrofolate + glycine + H2O = (6S)-5,6,7,8-tetrahydrofolate + L-serine. Its pathway is one-carbon metabolism; tetrahydrofolate interconversion. It participates in amino-acid biosynthesis; glycine biosynthesis; glycine from L-serine: step 1/1. In terms of biological role, catalyzes the reversible interconversion of serine and glycine with tetrahydrofolate (THF) serving as the one-carbon carrier. This reaction serves as the major source of one-carbon groups required for the biosynthesis of purines, thymidylate, methionine, and other important biomolecules. Also exhibits THF-independent aldolase activity toward beta-hydroxyamino acids, producing glycine and aldehydes, via a retro-aldol mechanism. The protein is Serine hydroxymethyltransferase 1 of Mycobacterium bovis (strain ATCC BAA-935 / AF2122/97).